A 561-amino-acid chain; its full sequence is Guanine nucleotide-binding protein-like 3 (561 aa).

Basic residues predominate over residues 28 to 46 (HNRKLKKAAKKQGISRKAK). 2 disordered regions span residues 28 to 58 (HNRK…APFK) and 76 to 110 (KEQN…KKAK). Residues 53 to 98 (NSAPFKEEVLREAEQRKQELETLKEQNKIVKQQEKAAKRKKEKDAA) adopt a coiled-coil conformation. Positions 76-88 (KEQNKIVKQQEKA) are enriched in basic and acidic residues. Positions 133 to 319 (CQELNKVIEA…MIDSPGILAA (187 aa)) constitute a CP-type G domain. Residues 181–184 (NKID), 268–275 (GFPNVGKS), and 312–315 (DSPG) each bind GTP. The tract at residues 486–532 (ATTTDAEEEKMDTTTNTDEPEAESHISSTVEPIQEPTEKRKDKPAKE) is disordered. Positions 521–532 (PTEKRKDKPAKE) are enriched in basic and acidic residues.

Belongs to the TRAFAC class YlqF/YawG GTPase family.

Its subcellular location is the nucleus. The protein localises to the nucleolus. Functionally, may play a role in regulating cellular proliferation. In Danio rerio (Zebrafish), this protein is Guanine nucleotide-binding protein-like 3 (gnl3).